We begin with the raw amino-acid sequence, 342 residues long: UDP-3-O-acylglucosamine N-acyltransferase (342 aa).

H253 (proton acceptor) is an active-site residue.

It belongs to the transferase hexapeptide repeat family. LpxD subfamily. As to quaternary structure, homotrimer.

The catalysed reaction is a UDP-3-O-[(3R)-3-hydroxyacyl]-alpha-D-glucosamine + a (3R)-hydroxyacyl-[ACP] = a UDP-2-N,3-O-bis[(3R)-3-hydroxyacyl]-alpha-D-glucosamine + holo-[ACP] + H(+). It participates in bacterial outer membrane biogenesis; LPS lipid A biosynthesis. Its function is as follows. Catalyzes the N-acylation of UDP-3-O-acylglucosamine using 3-hydroxyacyl-ACP as the acyl donor. Is involved in the biosynthesis of lipid A, a phosphorylated glycolipid that anchors the lipopolysaccharide to the outer membrane of the cell. This chain is UDP-3-O-acylglucosamine N-acyltransferase, found in Rickettsia bellii (strain RML369-C).